The primary structure comprises 367 residues: Isocitrate dehydrogenase [NAD] regulatory subunit 1, mitochondrial (367 aa).

The N-terminal 25 residues, 1–25 (MSRRSLTLLKNLARNANGSGIQTRS), are a transit peptide targeting the mitochondrion.

The protein belongs to the isocitrate and isopropylmalate dehydrogenases family. As to quaternary structure, heterooligomer of catalytic and regulatory subunits. As to expression, ubiquitous. Predominantly expressed in roots, stems and leaves.

Its subcellular location is the mitochondrion. Its function is as follows. Performs an essential role in the oxidative function of the citric acid cycle. The polypeptide is Isocitrate dehydrogenase [NAD] regulatory subunit 1, mitochondrial (IDH1) (Arabidopsis thaliana (Mouse-ear cress)).